A 108-amino-acid chain; its full sequence is Thiosulfate sulfurtransferase GlpE (108 aa).

Residues 17 to 105 (HQGAAVLVDI…WHRRFPADVA (89 aa)) enclose the Rhodanese domain. C65 functions as the Cysteine persulfide intermediate in the catalytic mechanism.

Belongs to the GlpE family.

It is found in the cytoplasm. The catalysed reaction is thiosulfate + hydrogen cyanide = thiocyanate + sulfite + 2 H(+). The enzyme catalyses thiosulfate + [thioredoxin]-dithiol = [thioredoxin]-disulfide + hydrogen sulfide + sulfite + 2 H(+). Transferase that catalyzes the transfer of sulfur from thiosulfate to thiophilic acceptors such as cyanide or dithiols. May function in a CysM-independent thiosulfate assimilation pathway by catalyzing the conversion of thiosulfate to sulfite, which can then be used for L-cysteine biosynthesis. The protein is Thiosulfate sulfurtransferase GlpE of Salmonella choleraesuis (strain SC-B67).